Reading from the N-terminus, the 236-residue chain is Geranylgeranylglyceryl phosphate synthase (236 aa).

Lys-13 lines the sn-glycerol 1-phosphate pocket. Residues Asp-15 and Thr-42 each coordinate Mg(2+). Sn-glycerol 1-phosphate-binding positions include 161 to 166 (YVEYSG), Gly-191, and 211 to 212 (GD).

This sequence belongs to the GGGP/HepGP synthase family. Group I subfamily. Mg(2+) serves as cofactor.

The protein localises to the cytoplasm. It catalyses the reaction sn-glycerol 1-phosphate + (2E,6E,10E)-geranylgeranyl diphosphate = sn-3-O-(geranylgeranyl)glycerol 1-phosphate + diphosphate. The protein operates within membrane lipid metabolism; glycerophospholipid metabolism. Functionally, prenyltransferase that catalyzes the transfer of the geranylgeranyl moiety of geranylgeranyl diphosphate (GGPP) to the C3 hydroxyl of sn-glycerol-1-phosphate (G1P). This reaction is the first ether-bond-formation step in the biosynthesis of archaeal membrane lipids. The sequence is that of Geranylgeranylglyceryl phosphate synthase from Halobacterium salinarum (strain ATCC 700922 / JCM 11081 / NRC-1) (Halobacterium halobium).